Here is a 147-residue protein sequence, read N- to C-terminus: UPF0306 protein YhbP (147 aa).

The protein belongs to the UPF0306 family.

This chain is UPF0306 protein YhbP, found in Salmonella schwarzengrund (strain CVM19633).